We begin with the raw amino-acid sequence, 295 residues long: MAAVVALGANVLSAKSIICDIEGTTTSISFVKDTLFPYALKHVEGYLKNNWNEEATKTVVTALREQAEEDKKAEVEGVVPIPTGDSEDIIPEIVKNVEWQMSLDRKTGSLKTLQGLVWAKGYKDGSIKGHVYDDVQKAFEQWTENGRKIYIYSSGSVDAQKLLFEHSEQGDLLKYLSGHYDTKIGAKREKESYTSILKNIESSPEEALFLTDVYAEAKAAKEAGLNVVLLDRPGNSELSEEERKDFPVIATFSDLSFAAETKEENGGATNGKRKIEETNDDVAEEDKAQVYPNKK.

Mg(2+)-binding residues include aspartate 20 and glutamate 22. Residues 153–154 (SS) and lysine 187 contribute to the substrate site. Aspartate 212 contributes to the Mg(2+) binding site. Residues 260–295 (ETKEENGGATNGKRKIEETNDDVAEEDKAQVYPNKK) form a disordered region.

The protein belongs to the HAD-like hydrolase superfamily. MasA/MtnC family. Monomer. Mg(2+) serves as cofactor.

Its subcellular location is the cytoplasm. The protein localises to the nucleus. The enzyme catalyses 5-methylsulfanyl-2,3-dioxopentyl phosphate + H2O = 1,2-dihydroxy-5-(methylsulfanyl)pent-1-en-3-one + phosphate. Its pathway is amino-acid biosynthesis; L-methionine biosynthesis via salvage pathway; L-methionine from S-methyl-5-thio-alpha-D-ribose 1-phosphate: step 3/6. It functions in the pathway amino-acid biosynthesis; L-methionine biosynthesis via salvage pathway; L-methionine from S-methyl-5-thio-alpha-D-ribose 1-phosphate: step 4/6. In terms of biological role, bifunctional enzyme that catalyzes the enolization of 2,3-diketo-5-methylthiopentyl-1-phosphate (DK-MTP-1-P) into the intermediate 2-hydroxy-3-keto-5-methylthiopentenyl-1-phosphate (HK-MTPenyl-1-P), which is then dephosphorylated to form the acireductone 1,2-dihydroxy-3-keto-5-methylthiopentene (DHK-MTPene). The chain is Enolase-phosphatase E1 from Anopheles gambiae (African malaria mosquito).